A 337-amino-acid polypeptide reads, in one-letter code: 1-aminocyclopropane-1-carboxylate deaminase (337 aa).

K50 carries the N6-(pyridoxal phosphate)lysine modification. S77 functions as the Nucleophile in the catalytic mechanism.

It belongs to the ACC deaminase/D-cysteine desulfhydrase family. As to quaternary structure, homotrimer. It depends on pyridoxal 5'-phosphate as a cofactor.

The enzyme catalyses 1-aminocyclopropane-1-carboxylate + H2O = 2-oxobutanoate + NH4(+). Functionally, catalyzes a cyclopropane ring-opening reaction, the irreversible conversion of 1-aminocyclopropane-1-carboxylate (ACC) to ammonia and alpha-ketobutyrate. Allows growth on ACC as a nitrogen source. This chain is 1-aminocyclopropane-1-carboxylate deaminase, found in Allorhizobium ampelinum (strain ATCC BAA-846 / DSM 112012 / S4) (Agrobacterium vitis (strain S4)).